Reading from the N-terminus, the 124-residue chain is Small ribosomal subunit protein uS13 (124 aa).

The tract at residues 95 to 124 (GLPVRGQRTKTNARTRKGPKRTIAGKKKAR) is disordered.

The protein belongs to the universal ribosomal protein uS13 family. In terms of assembly, part of the 30S ribosomal subunit. Forms a loose heterodimer with protein S19. Forms two bridges to the 50S subunit in the 70S ribosome.

Functionally, located at the top of the head of the 30S subunit, it contacts several helices of the 16S rRNA. In the 70S ribosome it contacts the 23S rRNA (bridge B1a) and protein L5 of the 50S subunit (bridge B1b), connecting the 2 subunits; these bridges are implicated in subunit movement. Contacts the tRNAs in the A and P-sites. This is Small ribosomal subunit protein uS13 from Mycobacterium marinum (strain ATCC BAA-535 / M).